We begin with the raw amino-acid sequence, 145 residues long: Bacilliredoxin SAR1592 (145 aa).

This sequence belongs to the bacilliredoxin family.

This is Bacilliredoxin SAR1592 from Staphylococcus aureus (strain MRSA252).